Consider the following 334-residue polypeptide: GTPase Obg (334 aa).

Residues 1–159 enclose the Obg domain; sequence MRFVDEVVIK…KEVRLELNLL (159 aa). In terms of domain architecture, OBG-type G spans 160-331; it reads ADVALLGLPN…LAKKLNEFLQ (172 aa). Residues 166–173, 191–195, 212–215, 282–285, and 312–314 contribute to the GTP site; these read GLPNAGKS, FTTMY, DIPG, NKID, and SAA. S173 and T193 together coordinate Mg(2+).

Belongs to the TRAFAC class OBG-HflX-like GTPase superfamily. OBG GTPase family. In terms of assembly, monomer. It depends on Mg(2+) as a cofactor.

It localises to the cytoplasm. Its function is as follows. An essential GTPase which binds GTP, GDP and possibly (p)ppGpp with moderate affinity, with high nucleotide exchange rates and a fairly low GTP hydrolysis rate. Plays a role in control of the cell cycle, stress response, ribosome biogenesis and in those bacteria that undergo differentiation, in morphogenesis control. The chain is GTPase Obg from Francisella tularensis subsp. mediasiatica (strain FSC147).